The sequence spans 611 residues: DNA mismatch repair protein MutL (611 aa).

It belongs to the DNA mismatch repair MutL/HexB family.

Its function is as follows. This protein is involved in the repair of mismatches in DNA. It is required for dam-dependent methyl-directed DNA mismatch repair. May act as a 'molecular matchmaker', a protein that promotes the formation of a stable complex between two or more DNA-binding proteins in an ATP-dependent manner without itself being part of a final effector complex. The polypeptide is DNA mismatch repair protein MutL (Bartonella bacilliformis (strain ATCC 35685 / KC583 / Herrer 020/F12,63)).